The following is a 90-amino-acid chain: UPF0213 protein lin0209 (90 aa).

A GIY-YIG domain is found at 5-80; the sequence is NEHFFYVLKC…KKLSRKNKDS (76 aa).

Belongs to the UPF0213 family.

The sequence is that of UPF0213 protein lin0209 from Listeria innocua serovar 6a (strain ATCC BAA-680 / CLIP 11262).